Consider the following 431-residue polypeptide: Protein EARLY STARVATION 1, chloroplastic (431 aa).

A chloroplast-targeting transit peptide spans 1–19 (MAACSRGLVARPFDLTARG). Disordered regions lie at residues 65–126 (GNKP…DTGI) and 403–431 (GVYPTIDFSASSPAPPSDDPPGMPPSPLE). A compositionally biased stretch (pro residues) spans 415–431 (PAPPSDDPPGMPPSPLE).

The protein belongs to the ESV1 family.

The protein resides in the plastid. It localises to the chloroplast stroma. Binds preferentially to highly ordered alpha-glucans, such as starch and crystalline maltodextrins. Involved in the organization of the starch granule matrix, thus influencing starch turnover by modulating the accessibility of starch polymers to modifying and degrading enzymes. Required for the control of starch degradation in leaves and starch distribution in nonphotosynthetic parts. Promotes gravitropic responses, negative in shoots but positive in roots, by facilitating starch granules (statoliths) formation in hypocotyls and roots columella. Facilitates tight packing of starch granules in grains. The protein is Protein EARLY STARVATION 1, chloroplastic of Oryza sativa subsp. indica (Rice).